The sequence spans 345 residues: G-protein coupled receptor family C group 5 member D (345 aa).

Over 1–27 (MYKDCIESTGDYFLLCDAEGPWGIILE) the chain is Extracellular. A helical transmembrane segment spans residues 28–48 (SLAILGIVVTILLLLAFLFLM). Residues 49–63 (RKIQDCSQWNVLPTQ) are Cytoplasmic-facing. A helical transmembrane segment spans residues 64–84 (LLFLLSVLGLFGLAFAFIIEL). Residues 85 to 93 (NQQTAPVRY) lie on the Extracellular side of the membrane. Residues 94–114 (FLFGVLFALCFSCLLAHASNL) traverse the membrane as a helical segment. The Cytoplasmic segment spans residues 115-123 (VKLVRGCVS). The helical transmembrane segment at 124–144 (FSWTTILCIAIGCSLLQIIIA) threads the bilayer. Topologically, residues 145–167 (TEYVTLIMTRGMMFVNMTPCQLN) are extracellular. The helical transmembrane segment at 168–188 (VDFVVLLVYVLFLMALTFFVS) threads the bilayer. Over 189–204 (KATFCGPCENWKQHGR) the chain is Cytoplasmic. Residues 205 to 225 (LIFITVLFSIIIWVVWISMLL) form a helical membrane-spanning segment. Topologically, residues 226–239 (RGNPQFQRQPQWDD) are extracellular. The helical transmembrane segment at 240 to 260 (PVVCIALVTNAWVFLLLYIVP) threads the bilayer. Residues 261–345 (ELCILYRSCR…LSPQQDAGGV (85 aa)) are Cytoplasmic-facing.

Belongs to the G-protein coupled receptor 3 family. As to quaternary structure, homodimer. Widely expressed in the peripheral system. Expression pattern is high in pancreas, medium in kidney, small intestine, spleen and testis, low in lung, colon, leukocyte, prostate and thymus and not detectable in brain, heart, liver, placenta, skeletal muscle and ovary.

It is found in the cell membrane. In terms of biological role, G-protein coupled receptor involved in hard keratin expression and likely plays a role in the development of hair and nails. This is G-protein coupled receptor family C group 5 member D (GPRC5D) from Homo sapiens (Human).